The chain runs to 749 residues: Protein phosphatase 1E (749 aa).

The disordered stretch occupies residues 21–128; it reads EFRGPCGGGE…PPLPPLPRPL (108 aa). Tandem repeats lie at residues 31 to 32, 33 to 34, and 35 to 36. The tract at residues 31 to 44 is 7 X 2 AA tandem repeats of P-E; it reads PEPEPESEPEPEPE. Acidic residues predominate over residues 31–45; sequence PEPEPESEPEPEPEA. The stretch at 37 to 38 is one 4; approximate repeat; it reads SE. 3 tandem repeats follow at residues 39-40, 41-42, and 43-44. The span at 46–55 shows a compositional bias: low complexity; it reads ELVAAEAAEA. A compositionally biased stretch (acidic residues) spans 69-102; it reads ATEEGEQDQDPEPEDEAVEEETATEGEEEEEEEA. Residues 110 to 126 are compositionally biased toward pro residues; sequence VPPPPQPQLPPLPPLPR. Residues 224 to 485 form the PPM-type phosphatase domain; that stretch reads QIYYETSIHA…DNITVIVVFL (262 aa). Residues Asp270, Gly271, Asp432, and Asp476 each coordinate Mn(2+). The disordered stretch occupies residues 495-537; the sequence is SEESEWTENSFQGGQEDGGDDKETHGECKRPWPQHQCSAPADL. Positions 515 to 524 are enriched in basic and acidic residues; the sequence is DKETHGECKR. Phosphoserine is present on residues Ser532 and Ser545. Positions 608 to 627 are disordered; the sequence is VKSSLPERSGAGEPRVSFNL.

It belongs to the PP2C family. In terms of assembly, heterotrimer. Interacts with PAX1 and ARHGEF6 (or ARHGEF7). It depends on Mg(2+) as a cofactor. The cofactor is Mn(2+).

The protein resides in the nucleus. Its subcellular location is the cytoplasm. It carries out the reaction O-phospho-L-seryl-[protein] + H2O = L-seryl-[protein] + phosphate. It catalyses the reaction O-phospho-L-threonyl-[protein] + H2O = L-threonyl-[protein] + phosphate. Protein phosphatase that inactivates multifunctional CaM kinases such as CAMK4 and CAMK2. Dephosphorylates and inactivates PAK. May play a role in the inhibition of actin fiber stress breakdown and in morphological changes driven by TNK2/CDC42. Dephosphorylates PRKAA2. The chain is Protein phosphatase 1E (Ppm1e) from Mus musculus (Mouse).